We begin with the raw amino-acid sequence, 317 residues long: uncharacterized protein (317 aa).

7 consecutive transmembrane segments (helical) span residues 18–38, 58–78, 92–112, 130–150, 165–185, 202–222, and 253–273; these read WWII…LIII, IIFG…GFIF, FLGH…WWSV, LFAT…AFGV, QPLS…KGEL, LAFL…LSTV, and LWGG…LMVN.

The protein belongs to the CbiQ family.

The protein resides in the cell membrane. This is an uncharacterized protein from Mycoplasma pneumoniae (strain ATCC 29342 / M129 / Subtype 1) (Mycoplasmoides pneumoniae).